The sequence spans 173 residues: MPRSQRNDNFIDKTFTVMADLILKVLPTSSQSKTAFAYYRDGMSAQADGEYAEALENYQAALELEEDPTDRSYILYNIGLIHASNGEHEKALEYYHQALELNPRMPQALNNIAVIYHYLGTQAEEQQRLEEAEQFFDRAADYWKRAIQLAPNNYIEAQNWLKTTGRSNIDVYF.

TPR repeat units follow at residues 35–68 (AFAY…EEDP), 72–105 (SYIL…NPRM), and 113–146 (AVIY…WKRA).

This sequence belongs to the Ycf3 family.

The protein localises to the cellular thylakoid membrane. Essential for the assembly of the photosystem I (PSI) complex. May act as a chaperone-like factor to guide the assembly of the PSI subunits. The sequence is that of Photosystem I assembly protein Ycf3 from Thermosynechococcus vestitus (strain NIES-2133 / IAM M-273 / BP-1).